Consider the following 256-residue polypeptide: EF-hand calcium-binding domain-containing protein 4A (256 aa).

Residues Met-1–Met-10 are compositionally biased toward basic residues. The interval Met-1–Ile-32 is disordered. EF-hand domains lie at Lys-41 to Leu-69 and Leu-71 to Val-106. The Ca(2+) site is built by Asp-84, Ser-86, Asn-88, Tyr-90, and Glu-95. A coiled-coil region spans residues Ile-190–Lys-235.

It belongs to the EFCAB4 family.

This Xenopus tropicalis (Western clawed frog) protein is EF-hand calcium-binding domain-containing protein 4A (cracr2b).